A 472-amino-acid polypeptide reads, in one-letter code: Carboxypeptidase Q (472 aa).

The N-terminal stretch at 1–20 is a signal peptide; sequence MRFLFFLFVAVVHLFSLGSG. Positions 21–44 are excised as a propeptide; sequence KAIYKSGVSQRTFQEIKEEIANYE. A glycan (N-linked (GlcNAc...) asparagine) is linked at asparagine 61. Zn(2+) contacts are provided by histidine 290 and aspartate 302. Glutamate 336 (nucleophile) is an active-site residue. Residue glutamate 337 coordinates Zn(2+). The N-linked (GlcNAc...) asparagine glycan is linked to asparagine 353. Aspartate 364 lines the Zn(2+) pocket. Asparagine 396 is a glycosylation site (N-linked (GlcNAc...) asparagine). Histidine 434 lines the Zn(2+) pocket.

This sequence belongs to the peptidase M28 family. Homodimer. The monomeric form is inactive while the homodimer is active. Post-translationally, N-glycosylated. The secreted form is modified by hybrid or complex type oligosaccharide chains.

The protein resides in the endoplasmic reticulum. It is found in the golgi apparatus. Its subcellular location is the lysosome. The protein localises to the secreted. Its function is as follows. Carboxypeptidase that may play an important role in the hydrolysis of circulating peptides. Catalyzes the hydrolysis of dipeptides with unsubstituted terminals into amino acids. May play a role in the liberation of thyroxine hormone from its thyroglobulin (Tg) precursor. The chain is Carboxypeptidase Q (Cpq) from Rattus norvegicus (Rat).